The sequence spans 215 residues: 3-isopropylmalate dehydratase small subunit (215 aa).

This sequence belongs to the LeuD family. LeuD type 1 subfamily. Heterodimer of LeuC and LeuD.

The enzyme catalyses (2R,3S)-3-isopropylmalate = (2S)-2-isopropylmalate. It participates in amino-acid biosynthesis; L-leucine biosynthesis; L-leucine from 3-methyl-2-oxobutanoate: step 2/4. In terms of biological role, catalyzes the isomerization between 2-isopropylmalate and 3-isopropylmalate, via the formation of 2-isopropylmaleate. This chain is 3-isopropylmalate dehydratase small subunit, found in Xylella fastidiosa (strain 9a5c).